A 311-amino-acid chain; its full sequence is Probable inactive peptidyl-prolyl cis-trans isomerase-like 6 (311 aa).

One can recognise a PPIase cyclophilin-type domain in the interval 145-308 (FLDICIDSSP…HMCRITDSGD (164 aa)).

It belongs to the cyclophilin-type PPIase family.

In terms of biological role, probable inactive PPIase with no peptidyl-prolyl cis-trans isomerase activity. The protein is Probable inactive peptidyl-prolyl cis-trans isomerase-like 6 of Homo sapiens (Human).